A 508-amino-acid chain; its full sequence is MVSNIGIRPAEISSIIRKKIEEYDQEVKIVNIGTVLQVGDGIARIYGLDQVMAGELLEFEDNTVGIALNLESDNVGAVLMGEGLTIQEGSSVKATGKIAQIPVGDSYLGRVVNALARPIDGKGDIDTSESRLIESPAPGIISRRSVYEPMQTGLIAIDSMIPIGRGQRELIIGDRQTGKTAVAVDTILNQKGQDVICVYVAIGQKASSVAQVVNTFEDRSALSYTIVVAETANSSATLQYLAPYTGASLAEYFMYKGRHTLVVYDDLSKQAQAYRQMSLLLRRPPGREAYPGDVFYLHSRLLERAAKLSSQLGEGSMTALPIVETQAGDVSAYIPTNVISITDGQIFLSADLFNAGIRPAINVGISVSRVGSAAQIKAMKQVAGKLKLELAQFAELEAFAQFASDLDKATQNQLARGQRLRELLKQAQSSPLSVEEQVATIYTGINGYLDKLETQQVRKFLTEFRIYLSSNKLEFIEILKSTKTFTDKAETKLKEALHEFTEEFLTSA.

173–180 (GDRQTGKT) serves as a coordination point for ATP.

It belongs to the ATPase alpha/beta chains family. In terms of assembly, F-type ATPases have 2 components, CF(1) - the catalytic core - and CF(0) - the membrane proton channel. CF(1) has five subunits: alpha(3), beta(3), gamma(1), delta(1), epsilon(1). CF(0) has four main subunits: a, b, b' and c.

It localises to the plastid. Its subcellular location is the chloroplast thylakoid membrane. The enzyme catalyses ATP + H2O + 4 H(+)(in) = ADP + phosphate + 5 H(+)(out). Functionally, produces ATP from ADP in the presence of a proton gradient across the membrane. The alpha chain is a regulatory subunit. The sequence is that of ATP synthase subunit alpha, chloroplastic from Chara vulgaris (Common stonewort).